Here is a 187-residue protein sequence, read N- to C-terminus: MKNIIFMGPPGAGKGTQAKILCERLSIPQISTGDILREAVKNQTAMGIEAKRYMDAGDLVPDSVVIGIIKDRIREADCKNGFLLDGFPRTVEQAEALDTLLKNEGKSIDKAINLQVPDAELLKRLLGRAEIEGRADDNEVTIKNRLDNYNKKTLPLLDFYATRKKLSQVNGVGSLEEVTSLIQKELA.

11-16 is an ATP binding site; it reads GAGKGT. Residues 31–60 form an NMP region; the sequence is STGDILREAVKNQTAMGIEAKRYMDAGDLV. Residues threonine 32, arginine 37, 58–60, 86–89, and glutamine 93 each bind AMP; these read DLV and GFPR. The interval 127 to 137 is LID; it reads GRAEIEGRADD. Residue arginine 128 participates in ATP binding. 2 residues coordinate AMP: arginine 134 and arginine 145. ATP is bound at residue glycine 173.

This sequence belongs to the adenylate kinase family. As to quaternary structure, monomer.

It localises to the cytoplasm. The catalysed reaction is AMP + ATP = 2 ADP. Its pathway is purine metabolism; AMP biosynthesis via salvage pathway; AMP from ADP: step 1/1. Catalyzes the reversible transfer of the terminal phosphate group between ATP and AMP. Plays an important role in cellular energy homeostasis and in adenine nucleotide metabolism. The sequence is that of Adenylate kinase from Leptospira interrogans serogroup Icterohaemorrhagiae serovar copenhageni (strain Fiocruz L1-130).